Consider the following 123-residue polypeptide: Small ribosomal subunit protein uS12 (123 aa).

Position 89 is a 3-methylthioaspartic acid (Asp89).

The protein belongs to the universal ribosomal protein uS12 family. Part of the 30S ribosomal subunit. Contacts proteins S8 and S17. May interact with IF1 in the 30S initiation complex.

Functionally, with S4 and S5 plays an important role in translational accuracy. Interacts with and stabilizes bases of the 16S rRNA that are involved in tRNA selection in the A site and with the mRNA backbone. Located at the interface of the 30S and 50S subunits, it traverses the body of the 30S subunit contacting proteins on the other side and probably holding the rRNA structure together. The combined cluster of proteins S8, S12 and S17 appears to hold together the shoulder and platform of the 30S subunit. The sequence is that of Small ribosomal subunit protein uS12 from Mesorhizobium japonicum (strain LMG 29417 / CECT 9101 / MAFF 303099) (Mesorhizobium loti (strain MAFF 303099)).